A 121-amino-acid chain; its full sequence is Small ribosomal subunit protein bS6 (121 aa).

The disordered stretch occupies residues 94 to 121 (KAETGPSAVMKRVEKEEARKSSQQETAA). Over residues 104 to 115 (KRVEKEEARKSS) the composition is skewed to basic and acidic residues.

It belongs to the bacterial ribosomal protein bS6 family.

Its function is as follows. Binds together with bS18 to 16S ribosomal RNA. This Leptothrix cholodnii (strain ATCC 51168 / LMG 8142 / SP-6) (Leptothrix discophora (strain SP-6)) protein is Small ribosomal subunit protein bS6.